Here is a 461-residue protein sequence, read N- to C-terminus: Fumarate hydratase class II (461 aa).

Substrate-binding positions include 97–99, 127–130, 137–139, and T185; these read SGT, HPND, and SSN. The active-site Proton donor/acceptor is H186. S316 is a catalytic residue. Substrate-binding positions include S317 and 322-324; that span reads KVN.

Belongs to the class-II fumarase/aspartase family. Fumarase subfamily. Homotetramer.

It localises to the cytoplasm. It carries out the reaction (S)-malate = fumarate + H2O. Its pathway is carbohydrate metabolism; tricarboxylic acid cycle; (S)-malate from fumarate: step 1/1. Involved in the TCA cycle. Catalyzes the stereospecific interconversion of fumarate to L-malate. The sequence is that of Fumarate hydratase class II from Staphylococcus aureus (strain MSSA476).